A 129-amino-acid polypeptide reads, in one-letter code: Gene 58 protein (129 aa).

Residues 87–129 (GNIPVQRKPARKPSRRVFGESRSSGSSGSTVRPGIRGRSTPWS) are disordered. The segment covering 106-115 (ESRSSGSSGS) has biased composition (low complexity).

This is Gene 58 protein (58) from Mycobacterium (Mycobacteriophage D29).